The chain runs to 264 residues: Indole-3-glycerol phosphate synthase (264 aa).

It belongs to the TrpC family.

It carries out the reaction 1-(2-carboxyphenylamino)-1-deoxy-D-ribulose 5-phosphate + H(+) = (1S,2R)-1-C-(indol-3-yl)glycerol 3-phosphate + CO2 + H2O. It participates in amino-acid biosynthesis; L-tryptophan biosynthesis; L-tryptophan from chorismate: step 4/5. The chain is Indole-3-glycerol phosphate synthase from Rhizorhabdus wittichii (strain DSM 6014 / CCUG 31198 / JCM 15750 / NBRC 105917 / EY 4224 / RW1) (Sphingomonas wittichii).